We begin with the raw amino-acid sequence, 828 residues long: Periplasmic nitrate reductase (828 aa).

The segment at residues 1–31 is a signal peptide (tat-type signal); the sequence is MKLSRRSFMKANAVAAAAAAAGLSVPGVARA. A 4Fe-4S Mo/W bis-MGD-type domain is found at 39–95; the sequence is IKWDKAPCRFCGTGCGVLVGTQQGRVVACQGDPDAPVNRGLNCIKGYFLPKIMYGKD. Residues Cys46, Cys49, Cys53, and Cys81 each coordinate [4Fe-4S] cluster. Mo-bis(molybdopterin guanine dinucleotide) contacts are provided by residues Lys83, Gln150, Asn175, Cys179, 212 to 219, 243 to 247, 262 to 264, Met372, Gln376, Asn482, 508 to 509, Lys531, Asp558, and 718 to 727; these read WGSNMAEM, STYQH, QSD, SD, and TGRVLEHWHT. Position 794 (Phe794) interacts with substrate. Asn802 and Lys819 together coordinate Mo-bis(molybdopterin guanine dinucleotide).

The protein belongs to the prokaryotic molybdopterin-containing oxidoreductase family. NasA/NapA/NarB subfamily. As to quaternary structure, component of the periplasmic nitrate reductase NapAB complex composed of NapA and NapB. The cofactor is [4Fe-4S] cluster. Requires Mo-bis(molybdopterin guanine dinucleotide) as cofactor. In terms of processing, predicted to be exported by the Tat system. The position of the signal peptide cleavage has not been experimentally proven.

Its subcellular location is the periplasm. It carries out the reaction 2 Fe(II)-[cytochrome] + nitrate + 2 H(+) = 2 Fe(III)-[cytochrome] + nitrite + H2O. In terms of biological role, catalytic subunit of the periplasmic nitrate reductase complex NapAB. Receives electrons from NapB and catalyzes the reduction of nitrate to nitrite. The polypeptide is Periplasmic nitrate reductase (Escherichia coli O127:H6 (strain E2348/69 / EPEC)).